A 268-amino-acid polypeptide reads, in one-letter code: uncharacterized protein (268 aa).

The next 4 membrane-spanning stretches (helical) occupy residues 32–52, 70–90, 125–145, and 237–257; these read SLLLISVFSTSFIVPLIIFFI, VFVGIPLGFGILNLVIFAFLF, GVSSMLFLAFTTPMVELFYIF, and IKYILFIAIFDIFLIILAYLT.

It belongs to the CbiQ family.

It localises to the cell membrane. This is an uncharacterized protein from Methanocaldococcus jannaschii (strain ATCC 43067 / DSM 2661 / JAL-1 / JCM 10045 / NBRC 100440) (Methanococcus jannaschii).